The chain runs to 385 residues: Leucine aminopeptidase 1 (385 aa).

The signal sequence occupies residues 1–14; it reads MKFLTLALSATATA. A propeptide spanning residues 15–85 is cleaved from the precursor; that stretch reads MIIVNPEQQP…YGTLHTTRVV (71 aa). Positions 185, 204, 243, and 270 each coordinate Zn(2+). An intrachain disulfide couples C319 to C323. H352 is a binding site for Zn(2+).

It belongs to the peptidase M28 family. M28E subfamily. Monomer. It depends on Zn(2+) as a cofactor.

The protein localises to the secreted. Functionally, extracellular aminopeptidase that allows assimilation of proteinaceous substrates. This Penicillium rubens (strain ATCC 28089 / DSM 1075 / NRRL 1951 / Wisconsin 54-1255) (Penicillium chrysogenum) protein is Leucine aminopeptidase 1 (lap1).